A 119-amino-acid polypeptide reads, in one-letter code: MKVLISSLLLLLPLMLMSMVSSSLNPGVARGHRDRGQASRRWLQEGGQECECKDWFLRAPRRKFMTVSGLPKKQCPCDHFKGNVKKTRHQRHHRKPNKHSRACQQFLKQCQLRSFALPL.

The N-terminal stretch at 1–21 (MKVLISSLLLLLPLMLMSMVS) is a signal peptide. Cystine bridges form between C75-C103 and C77-C110. A disordered region spans residues 81-100 (KGNVKKTRHQRHHRKPNKHS). Residues 82-100 (GNVKKTRHQRHHRKPNKHS) show a composition bias toward basic residues.

The protein belongs to the intercrine alpha (chemokine CxC) family. In terms of processing, likely to undergo an endoproteolytic process to form a four-cysteine-containing mature peptide with a canonical CXC chemokine scaffold after secretion. Detected in trachea, stomach, lung and skeletal muscle. Detected in intestine and in normal and asthmatic lung (at protein level). Breast tumors showed 3- to 24-fold up-regulation.

The protein resides in the secreted. Chemokine that acts as a chemoattractant for monocytes, macrophages and dendritic cells. Plays a role in angiogenesis and possibly in the development of tumors. Acts as an anti-inflammatory in the stomach. May play a role in the innate defense against infections. Activates the C-X-C chemokine receptor GPR35 to induce a rapid and transient rise in the level of intracellular calcium ions. Functionally, seems to exhibit much higher chemoattractant potency on monocytes and macrophages than 6-Cys CXCL17. The chain is C-X-C motif chemokine 17 (CXCL17) from Homo sapiens (Human).